The sequence spans 120 residues: Large ribosomal subunit protein uL18 (120 aa).

Belongs to the universal ribosomal protein uL18 family. Part of the 50S ribosomal subunit; part of the 5S rRNA/L5/L18/L25 subcomplex. Contacts the 5S and 23S rRNAs.

Its function is as follows. This is one of the proteins that bind and probably mediate the attachment of the 5S RNA into the large ribosomal subunit, where it forms part of the central protuberance. The chain is Large ribosomal subunit protein uL18 from Halalkalibacterium halodurans (strain ATCC BAA-125 / DSM 18197 / FERM 7344 / JCM 9153 / C-125) (Bacillus halodurans).